The sequence spans 428 residues: Histidinol dehydrogenase (428 aa).

Substrate contacts are provided by S234, Q256, and H259. Zn(2+) contacts are provided by Q256 and H259. Active-site proton acceptor residues include E324 and H325. Substrate contacts are provided by H325, D358, E412, and H417. D358 contributes to the Zn(2+) binding site. H417 provides a ligand contact to Zn(2+).

The protein belongs to the histidinol dehydrogenase family. Zn(2+) is required as a cofactor.

The enzyme catalyses L-histidinol + 2 NAD(+) + H2O = L-histidine + 2 NADH + 3 H(+). Its pathway is amino-acid biosynthesis; L-histidine biosynthesis; L-histidine from 5-phospho-alpha-D-ribose 1-diphosphate: step 9/9. In terms of biological role, catalyzes the sequential NAD-dependent oxidations of L-histidinol to L-histidinaldehyde and then to L-histidine. This is Histidinol dehydrogenase from Pelagibacter ubique (strain HTCC1062).